The chain runs to 108 residues: Small ribosomal subunit protein mS33 (108 aa).

A disordered region spans residues 84–108 (LRARDKGAPKKKRTAPSAADAKKKK).

Belongs to the mitochondrion-specific ribosomal protein mS33 family. In terms of assembly, component of the mitochondrial small ribosomal subunit (mt-SSU). Mature N.crassa 74S mitochondrial ribosomes consist of a small (37S) and a large (54S) subunit. The 37S small subunit contains a 16S ribosomal RNA (16S mt-rRNA) and 32 different proteins. The 54S large subunit contains a 23S rRNA (23S mt-rRNA) and 42 different proteins.

It is found in the mitochondrion. Its function is as follows. Component of the mitochondrial ribosome (mitoribosome), a dedicated translation machinery responsible for the synthesis of mitochondrial genome-encoded proteins, including at least some of the essential transmembrane subunits of the mitochondrial respiratory chain. The mitoribosomes are attached to the mitochondrial inner membrane and translation products are cotranslationally integrated into the membrane. The protein is Small ribosomal subunit protein mS33 (rsm27) of Neurospora crassa (strain ATCC 24698 / 74-OR23-1A / CBS 708.71 / DSM 1257 / FGSC 987).